Consider the following 418-residue polypeptide: ATP-dependent RNA helicase RhlB (418 aa).

The Q motif signature appears at 9–37; the sequence is TKFADLPLEKSLISGLTSQGYEYCTPIQA. In terms of domain architecture, Helicase ATP-binding spans 40–219; the sequence is LPITLTGKDI…FEHMNDPESI (180 aa). Residue 53-60 participates in ATP binding; the sequence is AQTGTGKT. The DEAD box motif lies at 165 to 168; sequence DEAD. Residues 243–390 form the Helicase C-terminal domain; the sequence is KILLLLSLIE…CSEYDKNAML (148 aa).

This sequence belongs to the DEAD box helicase family. RhlB subfamily. Component of the RNA degradosome, which is a multiprotein complex involved in RNA processing and mRNA degradation.

It localises to the cytoplasm. It catalyses the reaction ATP + H2O = ADP + phosphate + H(+). Functionally, DEAD-box RNA helicase involved in RNA degradation. Has RNA-dependent ATPase activity and unwinds double-stranded RNA. In Psychromonas ingrahamii (strain DSM 17664 / CCUG 51855 / 37), this protein is ATP-dependent RNA helicase RhlB.